A 73-amino-acid chain; its full sequence is Translation initiation factor IF-1 2 (73 aa).

Positions Met-1–Lys-72 constitute an S1-like domain.

This sequence belongs to the IF-1 family. In terms of assembly, component of the 30S ribosomal translation pre-initiation complex which assembles on the 30S ribosome in the order IF-2 and IF-3, IF-1 and N-formylmethionyl-tRNA(fMet); mRNA recruitment can occur at any time during PIC assembly.

It is found in the cytoplasm. Its function is as follows. One of the essential components for the initiation of protein synthesis. Stabilizes the binding of IF-2 and IF-3 on the 30S subunit to which N-formylmethionyl-tRNA(fMet) subsequently binds. Helps modulate mRNA selection, yielding the 30S pre-initiation complex (PIC). Upon addition of the 50S ribosomal subunit IF-1, IF-2 and IF-3 are released leaving the mature 70S translation initiation complex. The chain is Translation initiation factor IF-1 2 from Cupriavidus pinatubonensis (strain JMP 134 / LMG 1197) (Cupriavidus necator (strain JMP 134)).